Consider the following 218-residue polypeptide: Octanoyltransferase (218 aa).

A BPL/LPL catalytic domain is found at 27–210 (AGAEETLYLL…QFRAIFADST (184 aa)). Substrate-binding positions include 72 to 79 (RGGNITCH), 139 to 141 (SIG), and 152 to 154 (GFA). Catalysis depends on Cys170, which acts as the Acyl-thioester intermediate.

The protein belongs to the LipB family.

Its subcellular location is the cytoplasm. The catalysed reaction is octanoyl-[ACP] + L-lysyl-[protein] = N(6)-octanoyl-L-lysyl-[protein] + holo-[ACP] + H(+). It functions in the pathway protein modification; protein lipoylation via endogenous pathway; protein N(6)-(lipoyl)lysine from octanoyl-[acyl-carrier-protein]: step 1/2. Its function is as follows. Catalyzes the transfer of endogenously produced octanoic acid from octanoyl-acyl-carrier-protein onto the lipoyl domains of lipoate-dependent enzymes. Lipoyl-ACP can also act as a substrate although octanoyl-ACP is likely to be the physiological substrate. This Nitratidesulfovibrio vulgaris (strain DSM 19637 / Miyazaki F) (Desulfovibrio vulgaris) protein is Octanoyltransferase.